We begin with the raw amino-acid sequence, 629 residues long: tRNA uridine 5-carboxymethylaminomethyl modification enzyme MnmG (629 aa).

FAD-binding positions include 14 to 19, valine 126, and serine 181; that span reads GAGHAG. An NAD(+)-binding site is contributed by 273–287; it reads GPRYCPSIEDKVVRF. Glutamine 370 serves as a coordination point for FAD.

The protein belongs to the MnmG family. As to quaternary structure, homodimer. Heterotetramer of two MnmE and two MnmG subunits. FAD is required as a cofactor.

It localises to the cytoplasm. In terms of biological role, NAD-binding protein involved in the addition of a carboxymethylaminomethyl (cmnm) group at the wobble position (U34) of certain tRNAs, forming tRNA-cmnm(5)s(2)U34. This is tRNA uridine 5-carboxymethylaminomethyl modification enzyme MnmG from Bacillus thuringiensis (strain Al Hakam).